Here is a 273-residue protein sequence, read N- to C-terminus: Undecaprenyl-diphosphatase (273 aa).

Helical transmembrane passes span 6 to 26 (SLLI…LPVS), 45 to 65 (AKTF…VMFW), 90 to 110 (LTLI…LVFH), 116 to 136 (LFNP…LIAA), 190 to 210 (YAAS…ATVL), 222 to 242 (ADIP…LIAI), and 252 to 272 (ISFI…YVVF).

Belongs to the UppP family.

The protein localises to the cell inner membrane. It carries out the reaction di-trans,octa-cis-undecaprenyl diphosphate + H2O = di-trans,octa-cis-undecaprenyl phosphate + phosphate + H(+). Functionally, catalyzes the dephosphorylation of undecaprenyl diphosphate (UPP). Confers resistance to bacitracin. The chain is Undecaprenyl-diphosphatase from Salmonella paratyphi C (strain RKS4594).